Reading from the N-terminus, the 412-residue chain is MNLKQELIERFTRYVKIDTQSNEDSHTVPTTPGQIEFGKLLVEELKEIGLTEVTMDDNGYVMATLPANTDKDVPVIGFLAHLDTATDFTGKNVKPQIHENFDGNAITLNEELNVVLTPEQFPELPSYKGHTIITTDGTTLLGADDKAGLTEIMVAMNYLIHNPQIKHGKIRVAFTPDEEIGRGPAHFDVEAFGASFAYTMDGGPLGGLEYESFNAAGAKLTFNGTNTHPGTAKNKMRNATKLAMEFNSYLPVEEAPEYTEGYEGFYHLLSLNGDVEQSKAYYIIRDFDRENFEVRKHNVENIVKQMQEKYGQDAVVLEMNDQYYNMLEKIEPVREIVDIAYEAMKSLNIEPNIHPIRGGTDGSQLSYMGLPTPNIFTGGENYHGKFEYVSVDVMEKAVQVIIEIARRFEEQA.

Histidine 81 lines the Zn(2+) pocket. The active site involves aspartate 83. Position 144 (aspartate 144) interacts with Zn(2+). The active-site Proton acceptor is the glutamate 178. Glutamate 179, aspartate 201, and histidine 383 together coordinate Zn(2+).

The protein belongs to the peptidase M20B family. Zn(2+) serves as cofactor.

The protein localises to the cytoplasm. The enzyme catalyses Release of the N-terminal residue from a tripeptide.. In terms of biological role, cleaves the N-terminal amino acid of tripeptides. The sequence is that of Peptidase T from Bacillus cereus (strain ZK / E33L).